The primary structure comprises 360 residues: NAD(P)H-quinone oxidoreductase subunit 1, chloroplastic (360 aa).

The next 8 helical transmembrane spans lie at 30-50, 98-118, 127-147, 165-185, 203-223, 248-268, 297-317, and 340-360; these read FLPI…LVWL, FSIG…VIPF, FNIG…GLLM, AAQS…ISLL, FWGW…ISSL, YSGI…LISS, IFGT…FLFI, and FLLP…VFSL.

This sequence belongs to the complex I subunit 1 family. As to quaternary structure, NDH is composed of at least 16 different subunits, 5 of which are encoded in the nucleus.

It is found in the plastid. Its subcellular location is the chloroplast thylakoid membrane. The catalysed reaction is a plastoquinone + NADH + (n+1) H(+)(in) = a plastoquinol + NAD(+) + n H(+)(out). The enzyme catalyses a plastoquinone + NADPH + (n+1) H(+)(in) = a plastoquinol + NADP(+) + n H(+)(out). Its function is as follows. NDH shuttles electrons from NAD(P)H:plastoquinone, via FMN and iron-sulfur (Fe-S) centers, to quinones in the photosynthetic chain and possibly in a chloroplast respiratory chain. The immediate electron acceptor for the enzyme in this species is believed to be plastoquinone. Couples the redox reaction to proton translocation, and thus conserves the redox energy in a proton gradient. The chain is NAD(P)H-quinone oxidoreductase subunit 1, chloroplastic from Aethionema grandiflorum (Persian stone-cress).